We begin with the raw amino-acid sequence, 237 residues long: GCN5-related N-acetyltransferase 3, chloroplastic (237 aa).

Residues 1 to 93 (MGLVGCVGKS…RAISRSDVIV (93 aa)) constitute a chloroplast transit peptide. Positions 94-237 (SVFCKPQHVD…TMMFTKSLEA (144 aa)) constitute an N-acetyltransferase domain. Residues 171–173 (LMV), 179–184 (RMGIGK), 207–209 (FED), and Phe214 each bind acetyl-CoA.

The protein belongs to the acetyltransferase family. GNAT subfamily. As to quaternary structure, oligomer. In terms of processing, autoacetylated. Expressed in green tissues.

It localises to the plastid. The protein resides in the chloroplast. It catalyses the reaction an N-terminal L-alpha-aminoacyl-[protein] + acetyl-CoA = N-terminal N(alpha)-acetyl-L-alpha-aminoacyl-[protein] + CoA + H(+). The enzyme catalyses L-lysyl-[protein] + acetyl-CoA = N(6)-acetyl-L-lysyl-[protein] + CoA + H(+). Its function is as follows. Protein acetyltransferase with dual specificity triggering both N-alpha-acetylation (NTA) and epsilon-lysine acetylation (KA), possibly with a low efficiency or toward specific plastid substrates. This chain is GCN5-related N-acetyltransferase 3, chloroplastic, found in Arabidopsis thaliana (Mouse-ear cress).